A 710-amino-acid polypeptide reads, in one-letter code: Bifunctional lysine-specific demethylase and histidyl-hydroxylase NO66 (710 aa).

Positions 103–137 are disordered; the sequence is TDEMNKTKKKQKKIMKKEIRKRTKRKRKSVNKREL. Positions 109-132 are enriched in basic residues; that stretch reads TKKKQKKIMKKEIRKRTKRKRKSV. In terms of domain architecture, JmjC spans 359-506; it reads CSIQLTNPQS…DLLERVIPPA (148 aa). Histidine 405, aspartate 407, and histidine 472 together coordinate Fe cation.

It belongs to the ROX family. NO66 subfamily. The cofactor is Fe(2+).

Its subcellular location is the nucleus. The catalysed reaction is N(6),N(6)-dimethyl-L-lysyl(36)-[histone H3] + 2 2-oxoglutarate + 2 O2 = L-lysyl(36)-[histone H3] + 2 formaldehyde + 2 succinate + 2 CO2. Oxygenase that can act as both a histone lysine demethylase and a ribosomal histidine hydroxylase. Specifically demethylates 'Lys-4' (H3K4me) and 'Lys-36' (H3K36me) of histone H3, thereby playing a central role in histone code. The sequence is that of Bifunctional lysine-specific demethylase and histidyl-hydroxylase NO66 from Brugia malayi (Filarial nematode worm).